We begin with the raw amino-acid sequence, 414 residues long: Probable isoprenylcysteine alpha-carbonyl methylesterase ICME (414 aa).

The tract at residues 1 to 54 (MQPASPVSGDAGPVAEAVPPRGAPQVLVRRRSVPFSPDSPLAPGSRGGGERRST) is disordered. The next 2 membrane-spanning stretches (helical) occupy residues 90–110 (LAAL…VGYY) and 145–165 (VVAF…GALL). Residues 151-153 (GGA) and 222-224 (QSA) each bind substrate. Active-site residues include Ser-223, Asp-323, and His-355.

The protein belongs to the AB hydrolase superfamily. Isoprenylcysteine methylesterase family.

Its subcellular location is the endoplasmic reticulum membrane. It localises to the golgi apparatus membrane. It catalyses the reaction [protein]-C-terminal S-[(2E,6E)-farnesyl]-L-cysteine methyl ester + H2O = [protein]-C-terminal S-[(2E,6E)-farnesyl]-L-cysteine + methanol + H(+). Catalyzes the demethylation of isoprenylcysteine methylesters. This is Probable isoprenylcysteine alpha-carbonyl methylesterase ICME (IMCE) from Oryza sativa subsp. japonica (Rice).